Here is a 277-residue protein sequence, read N- to C-terminus: Large ribosomal subunit protein uL2 (277 aa).

The interval 219-277 (TVRGSVMNPNDHPHGGGEGKAPVGRKAPSTPWGKPALGLKTRNKKAKSNKLIVRRRNEK) is disordered. The segment covering 259–277 (TRNKKAKSNKLIVRRRNEK) has biased composition (basic residues).

The protein belongs to the universal ribosomal protein uL2 family. As to quaternary structure, part of the 50S ribosomal subunit. Forms a bridge to the 30S subunit in the 70S ribosome.

Its function is as follows. One of the primary rRNA binding proteins. Required for association of the 30S and 50S subunits to form the 70S ribosome, for tRNA binding and peptide bond formation. It has been suggested to have peptidyltransferase activity; this is somewhat controversial. Makes several contacts with the 16S rRNA in the 70S ribosome. This Streptococcus equi subsp. zooepidemicus (strain MGCS10565) protein is Large ribosomal subunit protein uL2.